A 48-amino-acid polypeptide reads, in one-letter code: uncharacterized protein (48 aa).

This is an uncharacterized protein from Saccharomyces cerevisiae (strain ATCC 204508 / S288c) (Baker's yeast).